Reading from the N-terminus, the 321-residue chain is PIH1 domain-containing protein 2 (321 aa).

Belongs to the PIH1 family.

The sequence is that of PIH1 domain-containing protein 2 (pih1d2) from Xenopus tropicalis (Western clawed frog).